The chain runs to 341 residues: Uroporphyrinogen decarboxylase (341 aa).

Residues 25–29, Phe-44, Asp-74, Tyr-151, Ser-206, and His-318 contribute to the substrate site; that span reads RQAGR.

It belongs to the uroporphyrinogen decarboxylase family. Homodimer.

Its subcellular location is the cytoplasm. It catalyses the reaction uroporphyrinogen III + 4 H(+) = coproporphyrinogen III + 4 CO2. It functions in the pathway porphyrin-containing compound metabolism; protoporphyrin-IX biosynthesis; coproporphyrinogen-III from 5-aminolevulinate: step 4/4. Functionally, catalyzes the decarboxylation of four acetate groups of uroporphyrinogen-III to yield coproporphyrinogen-III. The chain is Uroporphyrinogen decarboxylase from Christiangramia forsetii (strain DSM 17595 / CGMCC 1.15422 / KT0803) (Gramella forsetii).